The sequence spans 1464 residues: DNA polymerase III PolC-type (1464 aa).

Residues 426–582 (YVVFDVETTG…YDAEATGRLL (157 aa)) form the Exonuclease domain.

This sequence belongs to the DNA polymerase type-C family. PolC subfamily.

The protein localises to the cytoplasm. It catalyses the reaction DNA(n) + a 2'-deoxyribonucleoside 5'-triphosphate = DNA(n+1) + diphosphate. Required for replicative DNA synthesis. This DNA polymerase also exhibits 3' to 5' exonuclease activity. The chain is DNA polymerase III PolC-type from Streptococcus thermophilus (strain ATCC BAA-491 / LMD-9).